The chain runs to 230 residues: MKEERPIIALDFSSFEETKAFLDLFPAEEKLYVKIGMELYYAQGPDIVRSIKSLGHNVFLDLKLHDIPNTVRAAMAVLKELDIDMATVHAAGGVEMLKAAREGLGQGPTLIAVTQLTSTSEDQMRGDQNIQTSLLESVLHYSKGAAKAQLDGVVCSAQEVEAIKAVTPTGFTCLTPGIRPKGSNIGDQKRVMTPNQARRIGSDYIVVGRPITQAKDPVAAYQAIKAEWAG.

Substrate is bound by residues aspartate 11, lysine 34, 61–70 (DLKLHDIPNT), threonine 117, arginine 179, glutamine 188, glycine 208, and arginine 209. Lysine 63 functions as the Proton donor in the catalytic mechanism.

Belongs to the OMP decarboxylase family. Type 1 subfamily. As to quaternary structure, homodimer.

It carries out the reaction orotidine 5'-phosphate + H(+) = UMP + CO2. It participates in pyrimidine metabolism; UMP biosynthesis via de novo pathway; UMP from orotate: step 2/2. Its function is as follows. Catalyzes the decarboxylation of orotidine 5'-monophosphate (OMP) to uridine 5'-monophosphate (UMP). The protein is Orotidine 5'-phosphate decarboxylase of Streptococcus pyogenes serotype M28 (strain MGAS6180).